A 360-amino-acid chain; its full sequence is MAFDPAANAGPPLDEIQWHTPPQFEAGIHSNSILYYFAQSPFYDKTSNNEVVFQQGLNNQAMSQYLATRELFESRLKEMSGLEFIVAQEPAETGPGMGTGVWVINKQTRRKRPPTNPARPEDGPPDEIIVHSVYFVVGENIYMAPTLADVLSSRIGAIATAITKTIPLVDEVSDWAPAVGRRYITPAQPSAGAGAASGTTNYTASRTATPLPDGLPSTATTNKPGAKAGGGTTTNDPLLDSLLMEEALLTHERYGTEYMDENPITGKPGDFHLTSTGRKTQTKSALTLKEAAAALPALNTKGLGAAGSNPLAKGAAAAAAANANAVTGKETKSPKTPGGGGPPKPKRRKSKNVITTPGAA.

Disordered stretches follow at residues 186-238 (PAQP…NDPL) and 316-360 (AAAA…PGAA). 2 stretches are compositionally biased toward low complexity: residues 190–205 (SAGA…YTAS) and 316–325 (AAAAAANANA).

It belongs to the Mediator complex subunit 6 family. In terms of assembly, component of the Mediator complex.

The protein resides in the nucleus. Its function is as follows. Component of the Mediator complex, a coactivator involved in the regulated transcription of nearly all RNA polymerase II-dependent genes. Mediator functions as a bridge to convey information from gene-specific regulatory proteins to the basal RNA polymerase II transcription machinery. Mediator is recruited to promoters by direct interactions with regulatory proteins and serves as a scaffold for the assembly of a functional preinitiation complex with RNA polymerase II and the general transcription factors. This is Mediator of RNA polymerase II transcription subunit 6 (med-6) from Neurospora crassa (strain ATCC 24698 / 74-OR23-1A / CBS 708.71 / DSM 1257 / FGSC 987).